The sequence spans 314 residues: Ribosomal protein L11 methyltransferase (314 aa).

S-adenosyl-L-methionine is bound by residues T163, G184, D206, and N248.

This sequence belongs to the methyltransferase superfamily. PrmA family.

It is found in the cytoplasm. It carries out the reaction L-lysyl-[protein] + 3 S-adenosyl-L-methionine = N(6),N(6),N(6)-trimethyl-L-lysyl-[protein] + 3 S-adenosyl-L-homocysteine + 3 H(+). Its function is as follows. Methylates ribosomal protein L11. The polypeptide is Ribosomal protein L11 methyltransferase (Lactobacillus delbrueckii subsp. bulgaricus (strain ATCC 11842 / DSM 20081 / BCRC 10696 / JCM 1002 / NBRC 13953 / NCIMB 11778 / NCTC 12712 / WDCM 00102 / Lb 14)).